The sequence spans 131 residues: Small ribosomal subunit protein uS8 (131 aa).

It belongs to the universal ribosomal protein uS8 family. As to quaternary structure, part of the 30S ribosomal subunit. Contacts proteins S5 and S12.

One of the primary rRNA binding proteins, it binds directly to 16S rRNA central domain where it helps coordinate assembly of the platform of the 30S subunit. This chain is Small ribosomal subunit protein uS8, found in Malacoplasma penetrans (strain HF-2) (Mycoplasma penetrans).